The primary structure comprises 218 residues: Synaptonemal complex central element protein 2 (218 aa).

Residues M1–E32 are compositionally biased toward basic and acidic residues. The interval M1 to P42 is disordered. Residues S61–K87 are a coiled coil. The tract at residues R171 to C218 is disordered. A compositionally biased stretch (polar residues) spans V198 to Q211.

This sequence belongs to the SYCE family. As to quaternary structure, homodimer. Found in a complex with SYCP1 and SYCE1. Interacts with SYCP1, SYCE1 and SYCE3. Interacts with TEX12.

It is found in the nucleus. The protein resides in the chromosome. Major component of the transverse central element of synaptonemal complexes (SCS), formed between homologous chromosomes during meiotic prophase. Requires SYCP1 in order to be incorporated into the central element. May have a role in the synaptonemal complex assembly, stabilization and recombination. The polypeptide is Synaptonemal complex central element protein 2 (SYCE2) (Homo sapiens (Human)).